Here is a 157-residue protein sequence, read N- to C-terminus: Probable cyclic pyranopterin monophosphate synthase (157 aa).

Residues 75–77 and 111–112 contribute to the substrate site; these read MCH and ME. Aspartate 126 is a catalytic residue.

The protein belongs to the MoaC family. In terms of assembly, homohexamer; trimer of dimers.

The catalysed reaction is (8S)-3',8-cyclo-7,8-dihydroguanosine 5'-triphosphate = cyclic pyranopterin phosphate + diphosphate. The protein operates within cofactor biosynthesis; molybdopterin biosynthesis. Catalyzes the conversion of (8S)-3',8-cyclo-7,8-dihydroguanosine 5'-triphosphate to cyclic pyranopterin monophosphate (cPMP). The protein is Probable cyclic pyranopterin monophosphate synthase of Methanosarcina mazei (strain ATCC BAA-159 / DSM 3647 / Goe1 / Go1 / JCM 11833 / OCM 88) (Methanosarcina frisia).